Reading from the N-terminus, the 545-residue chain is Membrane protein insertase YidC (545 aa).

A helical transmembrane segment spans residues 8-28 (ILLATVLSVGILILWQVIFPK). The segment at 31-69 (PPKPAPTPAAEVAKPAAPAAPAPGAAAPAVPAPPPDAPE) is disordered. Low complexity predominate over residues 38-59 (PAAEVAKPAAPAAPAPGAAAPA). 5 helical membrane passes run 325-345 (IDYG…LYVM), 355-375 (WGVA…PLTY), 421-441 (LGGC…YAAL), 458-478 (LTAH…SFVM), and 497-517 (FFPG…TLYI).

The protein belongs to the OXA1/ALB3/YidC family. Type 1 subfamily. As to quaternary structure, interacts with the Sec translocase complex via SecD. Specifically interacts with transmembrane segments of nascent integral membrane proteins during membrane integration.

It is found in the cell inner membrane. In terms of biological role, required for the insertion and/or proper folding and/or complex formation of integral membrane proteins into the membrane. Involved in integration of membrane proteins that insert both dependently and independently of the Sec translocase complex, as well as at least some lipoproteins. Aids folding of multispanning membrane proteins. This Anaeromyxobacter dehalogenans (strain 2CP-C) protein is Membrane protein insertase YidC.